The sequence spans 251 residues: MNLNSIPAFDDNYIWVLNDEAGRCLIVDPGDAEPVLNAISANNWQPEAIFLTHHHHDHVGGVKELVEKFPQIVVYGPQETQDKGTTQVVKDGETAFVLGHEFSVIATPGHTLGHICYFSKPYLFCGDTLFSGGCGRLFEGTPSQMYQSLKKLSALPDDTLVCCAHEYTLSNMKFALSILPHDLSINDYYRKVKELRAKNQITLPVILKNERQINVFLRTENIDLINVINEETLLQQPEERFAWLRSKKDRF.

Positions 53, 55, 57, 58, 110, 127, and 165 each coordinate Zn(2+).

It belongs to the metallo-beta-lactamase superfamily. Glyoxalase II family. Monomer. The cofactor is Zn(2+).

It catalyses the reaction an S-(2-hydroxyacyl)glutathione + H2O = a 2-hydroxy carboxylate + glutathione + H(+). Its pathway is secondary metabolite metabolism; methylglyoxal degradation; (R)-lactate from methylglyoxal: step 2/2. Its function is as follows. Thiolesterase that catalyzes the hydrolysis of S-D-lactoyl-glutathione to form glutathione and D-lactic acid. The polypeptide is Hydroxyacylglutathione hydrolase (Escherichia coli O81 (strain ED1a)).